A 1481-amino-acid polypeptide reads, in one-letter code: Cystic fibrosis transmembrane conductance regulator (1481 aa).

The Cytoplasmic segment spans residues Met1 to Phe77. Residues Phe78 to Gln98 traverse the membrane as a helical segment. In terms of domain architecture, ABC transmembrane type-1 1 spans Phe81–Leu365. Over Pro99–Tyr122 the chain is Extracellular. Residues Leu123 to His146 traverse the membrane as a helical segment. Topologically, residues His147–Leu195 are cytoplasmic. Residues Ala196–Trp216 form a helical membrane-spanning segment. The Extracellular portion of the chain corresponds to Glu217–Phe222. The chain crosses the membrane as a helical span at residues Thr223–Met243. Residues Met244–Lys298 lie on the Cytoplasmic side of the membrane. A helical transmembrane segment spans residues Ala299–Phe319. Over Leu320–Thr339 the chain is Extracellular. Residues Ile340–Val358 traverse the membrane as a helical segment. Topologically, residues Gln359–Ser858 are cytoplasmic. ATP is bound by residues Trp401, Gly457 to Thr464, and Gln492. The 223-residue stretch at Asn423–Gly645 folds into the ABC transporter 1 domain. Residue Cys523 is the site of S-palmitoyl cysteine attachment. Phosphoserine is present on residues Ser548 and Ser659. The disordered R region stretch occupies residues Thr653 to Asp831. Phosphoserine; by PKA is present on Ser669. Ser685 bears the Phosphoserine mark. A Glycyl lysine isopeptide (Lys-Gly) (interchain with G-Cter in ubiquitin) cross-link involves residue Lys687. Phosphoserine is present on residues Ser699 and Ser711. Thr716 is subject to Phosphothreonine. A phosphoserine mark is found at Ser736, Ser767, Ser790, Ser795, and Ser813. A helical membrane pass occupies residues Leu859–Val879. The 297-residue stretch at Leu859 to Ser1155 folds into the ABC transmembrane type-1 2 domain. The Extracellular portion of the chain corresponds to Val880 to Ile918. Residues Asn894 and Asn900 are each glycosylated (N-linked (GlcNAc...) asparagine). Residues Tyr919–His939 traverse the membrane as a discontinuously helical segment. The Cytoplasmic portion of the chain corresponds to Thr940–Thr990. Residues Ile991 to Leu1011 traverse the membrane as a helical segment. Residues Gln1012–Pro1013 are Extracellular-facing. Residues Tyr1014–Leu1034 traverse the membrane as a helical segment. Topologically, residues His1035–Thr1095 are cytoplasmic. The chain crosses the membrane as a helical span at residues Leu1096–Phe1116. Residues Ile1117 to Gly1130 lie on the Extracellular side of the membrane. A helical transmembrane segment spans residues Ile1131–Ile1151. Residues Asp1152–Leu1481 are Cytoplasmic-facing. The 234-residue stretch at Met1211–Pro1444 folds into the ABC transporter 2 domain. ATP contacts are provided by residues Tyr1220 and Gly1245 to Ser1252. The interval Arg1387–Leu1481 is interaction with GORASP2. Residue Cys1396 is the site of S-palmitoyl cysteine attachment. The segment at Pro1452–Leu1481 is disordered. Over residues Gln1453–Asn1464 the composition is skewed to low complexity. Ser1457 carries the phosphoserine modification. The segment covering Glu1471–Leu1481 has biased composition (acidic residues). Positions Thr1479 to Leu1481 match the PDZ-binding motif.

The protein belongs to the ABC transporter superfamily. ABCC family. CFTR transporter (TC 3.A.1.202) subfamily. Monomer; does not require oligomerization for channel activity. May form oligomers in the membrane. Interacts with SLC26A3, SLC26A6 and NHERF1. Interacts with SHANK2. Interacts with MYO6. Interacts (via C-terminus) with GOPC (via PDZ domain); this promotes CFTR internalization and thereby decreases channel activity. Interacts with SLC4A7 through NHERF1. Found in a complex with MYO5B and RAB11A. Interacts with ANO1. Interacts with SLC26A8. Interacts with AHCYL1; the interaction increases CFTR activity. Interacts with CSE1L. The core-glycosylated form interacts with GORASP2 (via PDZ GRASP-type 1 domain) in respone to ER stress. Interacts with MARCHF2; the interaction leads to CFTR ubiqtuitination and degradation. Interacts with ADGRG2. Post-translationally, N-glycosylated. In terms of processing, phosphorylated; cAMP treatment promotes phosphorylation and activates the channel. Dephosphorylation decreases the ATPase activity (in vitro). Phosphorylation at PKA sites activates the channel. Phosphorylation at PKC sites enhances the response to phosphorylation by PKA. Phosphorylated by AMPK; this inhibits channel activity. Ubiquitinated, leading to its degradation in the lysosome. Deubiquitination by USP10 in early endosomes enhances its endocytic recycling to the cell membrane. Ubiquitinated by RNF185 during ER stress. Ubiquitinated by MARCHF2.

Its subcellular location is the apical cell membrane. It localises to the early endosome membrane. The protein resides in the cell membrane. The protein localises to the recycling endosome membrane. It is found in the endoplasmic reticulum membrane. Its subcellular location is the nucleus. It catalyses the reaction ATP + H2O + closed Cl(-) channel = ADP + phosphate + open Cl(-) channel.. The enzyme catalyses chloride(in) = chloride(out). It carries out the reaction hydrogencarbonate(in) = hydrogencarbonate(out). The catalysed reaction is ATP + H2O = ADP + phosphate + H(+). Functionally, epithelial ion channel that plays an important role in the regulation of epithelial ion and water transport and fluid homeostasis. Mediates the transport of chloride ions across the cell membrane. Possesses an intrinsic ATPase activity and utilizes ATP to gate its channel; the passive flow of anions through the channel is gated by cycles of ATP binding and hydrolysis by the ATP-binding domains. The ion channel is also permeable to HCO(3)(-); selectivity depends on the extracellular chloride concentration. Exerts its function also by modulating the activity of other ion channels and transporters. Contributes to the regulation of the pH and the ion content of the epithelial fluid layer. Modulates the activity of the epithelial sodium channel (ENaC) complex, in part by regulating the cell surface expression of the ENaC complex. May regulate bicarbonate secretion and salvage in epithelial cells by regulating the transporter SLC4A7. Can inhibit the chloride channel activity of ANO1. Plays a role in the chloride and bicarbonate homeostasis during sperm epididymal maturation and capacitation. The polypeptide is Cystic fibrosis transmembrane conductance regulator (Muntiacus muntjak (Barking deer)).